The chain runs to 220 residues: MALELWQTLKEAIHAYTGLSPVVFFTALALAFAIYQVISGWFASPFDDVNRHQRARSLAQEEEPPIPQPVQVGEITEEELKQYDGSDPQKPLLMAIKHQIYDVTQSRMFYGPGGPYALFAGKDASRALAKMSFEEKDLTWDVSGLGPFELDALQDWEYKFMSKYAKVGTVKVAGSEPETASVSEPTENVEQDAHVTTTPGKTVVDKSDDAPAETVLKKEE.

The chain crosses the membrane as a helical span at residues 22–42 (VVFFTALALAFAIYQVISGWF). A Cytochrome b5 heme-binding domain is found at 74-171 (EITEEELKQY…SKYAKVGTVK (98 aa)). The steroid-binding stretch occupies residues 74 to 171 (EITEEELKQY…SKYAKVGTVK (98 aa)). The tract at residues 174–220 (GSEPETASVSEPTENVEQDAHVTTTPGKTVVDKSDDAPAETVLKKEE) is disordered. Positions 178–200 (ETASVSEPTENVEQDAHVTTTPG) are enriched in polar residues. Residues 203-220 (VVDKSDDAPAETVLKKEE) show a composition bias toward basic and acidic residues.

Belongs to the cytochrome b5 family. MAPR subfamily. Interacts with BAK1 (via extracellular region). In terms of tissue distribution, expressed in cotyledons, stems, roots, leaves, flower and silique stalks, pistils and stigmas, but not in anthers.

It localises to the cell membrane. The protein resides in the endosome membrane. Functionally, MSBP1 can bind to multiple steroid compounds with different affinities. Negatively regulates cell elongation and brassinosteroid signaling. May act as a coreceptor with BAK1 and enhances its endocytosis. The polypeptide is Membrane steroid-binding protein 1 (MSBP1) (Arabidopsis thaliana (Mouse-ear cress)).